Reading from the N-terminus, the 372-residue chain is N-acetyllactosaminide beta-1,3-N-acetylglucosaminyltransferase 3 (372 aa).

At 1-10 (MKYLRHRRPN) the chain is on the cytoplasmic side. Residues 11–31 (ATLILAIGAFTLLLFSLLVSP) form a helical; Signal-anchor for type II membrane protein membrane-spanning segment. At 32 to 372 (PTCKVQEQPP…LTCGNQTQIY (341 aa)) the chain is on the lumenal side. N-linked (GlcNAc...) asparagine glycosylation is found at asparagine 64, asparagine 184, asparagine 202, asparagine 362, and asparagine 367.

It belongs to the glycosyltransferase 31 family. In terms of tissue distribution, expressed in colon, jejunum, stomach, esophagus, placenta and trachea.

Its subcellular location is the golgi apparatus membrane. It carries out the reaction a 3-O-{beta-D-galactosyl-(1-&gt;3)-[N-acetyl-beta-D-glucosaminyl-(1-&gt;6)]-N-acetyl-alpha-D-galactosaminyl}-L-threonyl-[protein] + UDP-N-acetyl-alpha-D-glucosamine = 3-O-{beta-D-GlcNAc-(1-&gt;3)-beta-D-Gal-(1-&gt;3)-[beta-D-GlcNAc-(1-&gt;6)]-alpha-D-GalNAc}-L-threonyl-[protein] + UDP + H(+). The enzyme catalyses 3-O-{beta-D-galactosyl-(1-&gt;3)-[N-acetyl-beta-D-glucosaminyl-(1-&gt;6)]-N-acetyl-alpha-D-galactosaminyl}-L-seryl-[protein] + UDP-N-acetyl-alpha-D-glucosamine = 3-O-{beta-D-GlcNAc-(1-&gt;3)-beta-D-Gal-(1-&gt;3)-[beta-D-GlcNAc-(1-&gt;6)]-alpha-D-GalNAc}-L-seryl-[protein] + UDP + H(+). The catalysed reaction is a beta-D-galactosyl-(1-&gt;4)-N-acetyl-beta-D-glucosaminyl derivative + UDP-N-acetyl-alpha-D-glucosamine = an N-acetyl-beta-D-glucosaminyl-(1-&gt;3)-beta-D-galactosyl-(1-&gt;4)-N-acetyl-beta-D-glucosaminyl derivative + UDP + H(+). It functions in the pathway protein modification; protein glycosylation. In terms of biological role, beta-1,3-N-acetylglucosaminyltransferase involved in the synthesis of poly-N-acetyllactosamine. Has activity for type 2 oligosaccharides. Also acts as a core1-1,3-N-acetylglucosaminyltransferase (Core1-beta3GlcNAcT) to form the 6-sulfo sialyl Lewis x on extended core1 O-glycans. The chain is N-acetyllactosaminide beta-1,3-N-acetylglucosaminyltransferase 3 (B3GNT3) from Homo sapiens (Human).